We begin with the raw amino-acid sequence, 430 residues long: Dihydroorotase (430 aa).

Zn(2+) contacts are provided by His60 and His62. Substrate is bound by residues 62–64 and Asn94; that span reads HFR. Zn(2+)-binding residues include Asp151, His178, and His231. A substrate-binding site is contributed by Asn277. Asp304 is a binding site for Zn(2+). The active site involves Asp304. Substrate-binding positions include His308 and 322-323; that span reads FG.

It belongs to the metallo-dependent hydrolases superfamily. DHOase family. Class I DHOase subfamily. Zn(2+) is required as a cofactor.

It carries out the reaction (S)-dihydroorotate + H2O = N-carbamoyl-L-aspartate + H(+). It participates in pyrimidine metabolism; UMP biosynthesis via de novo pathway; (S)-dihydroorotate from bicarbonate: step 3/3. Its function is as follows. Catalyzes the reversible cyclization of carbamoyl aspartate to dihydroorotate. This Carboxydothermus hydrogenoformans (strain ATCC BAA-161 / DSM 6008 / Z-2901) protein is Dihydroorotase.